The following is a 711-amino-acid chain: Long-chain-fatty-acid--CoA ligase 4 (711 aa).

Residues 8–28 form a helical; Signal-anchor for type III membrane protein membrane-spanning segment; the sequence is LTIVLLPVHLLITIYSALIFI. Residues 29 to 711 are Cytoplasmic-facing; the sequence is PWYFLTNAKK…KDIERMYGGK (683 aa). Residue S447 is modified to Phosphoserine.

This sequence belongs to the ATP-dependent AMP-binding enzyme family. Requires Mg(2+) as cofactor.

The protein localises to the mitochondrion outer membrane. Its subcellular location is the peroxisome membrane. It is found in the microsome membrane. It localises to the endoplasmic reticulum membrane. The protein resides in the cell membrane. It catalyses the reaction a long-chain fatty acid + ATP + CoA = a long-chain fatty acyl-CoA + AMP + diphosphate. The enzyme catalyses (5Z,8Z,11Z,14Z)-eicosatetraenoate + ATP + CoA = (5Z,8Z,11Z,14Z)-eicosatetraenoyl-CoA + AMP + diphosphate. It carries out the reaction 15-hydroxy-(5Z,8Z,11Z,13E)-eicosatetraenoate + ATP + CoA = 15-hydroxy-(5Z,8Z,11Z,13E)-eicosatetraenoyl-CoA + AMP + diphosphate. The catalysed reaction is 12-hydroxy-(5Z,8Z,10E,14Z)-eicosatetraenoate + ATP + CoA = 12-hydroxy-(5Z,8Z,10E,14Z)-eicosatetraenoyl-CoA + AMP + diphosphate. It catalyses the reaction 5-hydroxy-(6E,8Z,11Z,14Z)-eicosatetraenoate + ATP + CoA = 5-hydroxy-(6E,8Z,11Z,14Z)-eicosatetraenoyl-CoA + AMP + diphosphate. The enzyme catalyses 5,6-epoxy-(8Z,11Z,14Z)-eicosatrienoate + ATP + CoA = 5,6-epoxy-(8Z,11Z,14Z)-eicosatrienoyl-CoA + AMP + diphosphate. It carries out the reaction 14,15-epoxy-(5Z,8Z,11Z)-eicosatrienoate + ATP + CoA = 14,15-epoxy-(5Z,8Z,11Z)-eicosatrienoyl-CoA + AMP + diphosphate. The catalysed reaction is 11,12-epoxy-(5Z,8Z,14Z)-eicosatrienoate + ATP + CoA = 11,12-epoxy-(5Z,8Z,14Z)-eicosatrienoyl-CoA + AMP + diphosphate. It catalyses the reaction 8,9-epoxy-(5Z,11Z,14Z)-eicosatrienoate + ATP + CoA = 8,9-epoxy-(5Z,11Z,14Z)-eicosatrienoyl-CoA + AMP + diphosphate. The enzyme catalyses hexadecanoate + ATP + CoA = hexadecanoyl-CoA + AMP + diphosphate. It carries out the reaction (E)-hexadec-2-enoate + ATP + CoA = (2E)-hexadecenoyl-CoA + AMP + diphosphate. Both triacsin C and rosiglitazone inhibit arachidonoyl-CoA ligase activity. Catalyzes the conversion of long-chain fatty acids to their active form acyl-CoA for both synthesis of cellular lipids, and degradation via beta-oxidation. Preferentially activates arachidonate and eicosapentaenoate as substrates. Preferentially activates 8,9-EET &gt; 14,15-EET &gt; 5,6-EET &gt; 11,12-EET. Modulates glucose-stimulated insulin secretion by regulating the levels of unesterified EETs. Modulates prostaglandin E2 secretion. In Rattus norvegicus (Rat), this protein is Long-chain-fatty-acid--CoA ligase 4 (Acsl4).